The following is a 444-amino-acid chain: Glutamyl-tRNA reductase (444 aa).

Residues Thr-49 to Arg-52, Ser-109, Glu-114 to Gln-116, and Gln-120 each bind substrate. The Nucleophile role is filled by Cys-50. Gly-189–Gly-194 serves as a coordination point for NADP(+).

Belongs to the glutamyl-tRNA reductase family. Homodimer.

It carries out the reaction (S)-4-amino-5-oxopentanoate + tRNA(Glu) + NADP(+) = L-glutamyl-tRNA(Glu) + NADPH + H(+). It functions in the pathway porphyrin-containing compound metabolism; protoporphyrin-IX biosynthesis; 5-aminolevulinate from L-glutamyl-tRNA(Glu): step 1/2. Functionally, catalyzes the NADPH-dependent reduction of glutamyl-tRNA(Glu) to glutamate 1-semialdehyde (GSA). This is Glutamyl-tRNA reductase from Bacillus cereus (strain ATCC 10987 / NRS 248).